The primary structure comprises 1051 residues: SWI/SNF-related matrix-associated actin-dependent regulator of chromatin subfamily A member 5 (1051 aa).

Over residues 1–15 the composition is skewed to pro residues; the sequence is MSSAVEPPPPPPPES. The disordered stretch occupies residues 1–81; that stretch reads MSSAVEPPPP…IQEPDPTYEE (81 aa). Position 2 is an N-acetylserine (serine 2). The segment covering 24–38 has biased composition (gly residues); sequence GAGGSSSGNKGGPEG. A compositionally biased stretch (low complexity) spans 39 to 53; sequence GAAPAAPCAAGSGPA. Position 55 is a phosphothreonine (threonine 55). Serine 65 carries the phosphoserine modification. Residues 68–81 show a composition bias toward basic and acidic residues; it reads KQKEIQEPDPTYEE. A Glycyl lysine isopeptide (Lys-Gly) (interchain with G-Cter in SUMO2) cross-link involves residue lysine 82. Phosphothreonine is present on threonine 112. A phosphoserine mark is found at serine 115, serine 136, and serine 170. The Helicase ATP-binding domain maps to 191–356; the sequence is ISLYENGING…WSLLNFLLPD (166 aa). 204–211 provides a ligand contact to ATP; the sequence is DEMGLGKT. Positions 307–310 match the DEAH box motif; the sequence is DEAH. An N6-acetyllysine modification is found at lysine 439. The 152-residue stretch at 486–637 folds into the Helicase C-terminal domain; the sequence is VLDKLLPKLK…SIVIQQGRLV (152 aa). Residues lysine 643, lysine 646, lysine 693, lysine 721, and lysine 734 each participate in a glycyl lysine isopeptide (Lys-Gly) (interchain with G-Cter in SUMO2) cross-link. Serine 754 carries the post-translational modification Phosphoserine. SANT domains lie at 839 to 891 and 942 to 1006; these read QGFT…ERCN and KGKN…LITL. Lysine 965 is covalently cross-linked (Glycyl lysine isopeptide (Lys-Gly) (interchain with G-Cter in SUMO2)). The tract at residues 1014-1051 is disordered; that stretch reads LEEKEKAEKKKRGPKPSTQKRKMDGAPDGRGRKKKLKL. Over residues 1022–1033 the composition is skewed to basic residues; it reads KKKRGPKPSTQK. Over residues 1034 to 1043 the composition is skewed to basic and acidic residues; the sequence is RKMDGAPDGR.

This sequence belongs to the SNF2/RAD54 helicase family. ISWI subfamily. In terms of assembly, component of the ACF-5 ISWI chromatin-remodeling complex (also called the ACF/WCRF complex) at least composed of SMARCA5/SNF2H and BAZ1A/ACF1, which regulates the spacing of histone octamers on the DNA template to facilitate access to DNA. Within the complex interacts with BAZ1A/ACF1; the interaction is direct and is required to slide nucleosomes from end to center positions on a DNA template in an ATP-dependent manner. Component of the CHRAC ISWI chromatin-remodeling complex at least composed of SMARCA5/SNF2H, BAZ1A/ACF1, CHRAC1 and POLE3; the complex preferentially binds DNA through the CHRAC1-POLE3 heterodimer and possesses ATP-dependent nucleosome-remodeling activity. Within the complex interacts with BAZ1A/ACF1; the interaction is direct and promotes the interaction with the POLE3-CHRAC1 heterodimer. Within the complex interacts with the POLE3-CHRAC1 heterodimer; the interaction is direct and enhances nucleosome sliding activity by the SMARCA5/SNF2H and BAZ1A/ACF1 interaction. Neither POLE3 nor CHRAC1 enhances nucleosome sliding activity of the ACF-5 ISWI chromatin remodeling complex. Component of the WICH-5 ISWI chromatin-remodeling complex (also called the WICH complex) at least composed of SMARCA5/SNF2H and BAZ1B/WSTF, which regulates the spacing of histone octamers on the DNA template to facilitate access to DNA. Within the complex interacts with BAZ1B/WSTF. Component of the NoRC-5 ISWI chromatin-remodeling complex (also called the NoRC chromatin-remodeling complex) at least composed of SMARCA5/SNF2H and BAZ2A/TIP5; the complex suppresses rDNA transcription by a combination of nucleosome remodeling, histone deacetylation, and DNA methylation. Within the complex interacts with BAZ2A/TIP5. Within the complex interacts with HDAC1. Component of the BRF-5 ISWI chromatin-remodeling complex at least composed of SMARCA5/SNF2H and BAZ2B. Within the complex interacts with BAZ2B. Component of the NURF-5 ISWI chromatin-remodeling complex at least composed of SMARCA5/SNF2H and BPTF. Within the complex interacts with BPFT. Component of the CERF-5 ISWI chromatin-remodeling complex at least composed of SMARCA5/SNF2H and CECR2. LUZP1 is detected as part of the CERF-5 complex in embryonic stem cells where it is involved in complex stabilization but is not detected in the complex in the testis. Component of the RSF-5 ISWI chromatin-remodeling complex (also called the RSF complex) at least composed of SMARCA5/SNF2H and RSF1. Within the complex interacts with RSF1. Interacts with the cohesin complex component RAD21; the interaction is direct. Interacts with the NuRD complex components HDAC2, RBBP4 and CHD4; the interactions are direct. Interacts with PCNA. Component of the B-WICH complex, at least composed of SMARCA5/SNF2H, BAZ1B/WSTF, SF3B1, DEK, MYO1C, ERCC6, MYBBP1A and DDX21 which positively regulates RNA polymerase III transcription. Interacts with MYO1C. Interacts with BEND3. Interacts with SIRT6; promoting recruitment to DNA damage sites. In terms of tissue distribution, ubiquitously expressed.

It is found in the nucleus. The protein resides in the chromosome. The enzyme catalyses ATP + H2O = ADP + phosphate + H(+). Its function is as follows. ATPase that possesses intrinsic ATP-dependent nucleosome-remodeling activity. Catalytic subunit of ISWI chromatin-remodeling complexes, which form ordered nucleosome arrays on chromatin and facilitate access to DNA during DNA-templated processes such as DNA replication, transcription, and repair; this may require intact histone H4 tails. Within the ISWI chromatin-remodeling complexes, slides edge- and center-positioned histone octamers away from their original location on the DNA template. Catalytic activity and histone octamer sliding propensity is regulated and determined by components of the ISWI chromatin-remodeling complexes. The BAZ1A/ACF1-, BAZ1B/WSTF-, BAZ2A/TIP5- and BAZ2B-containing ISWI chromatin-remodeling complexes regulate the spacing of nucleosomes along the chromatin and have the ability to slide mononucleosomes to the center of a DNA template in an ATP-dependent manner. The CECR2- and RSF1-containing ISWI chromatin-remodeling complexes do not have the ability to slide mononucleosomes to the center of a DNA template. Binds to core histones together with RSF1, and is required for the assembly of regular nucleosome arrays by the RSF-5 ISWI chromatin-remodeling complex. Involved in DNA replication and together with BAZ1A/ACF1 is required for replication of pericentric heterochromatin in S-phase. Probably plays a role in repression of RNA polymerase I dependent transcription of the rDNA locus, through the recruitment of the SIN3/HDAC1 corepressor complex to the rDNA promoter. The WICH-5 ISWI chromatin-remodeling complex regulates the transcription of various genes, has a role in RNA polymerase I and RNA polymerase III transcription, mediates the histone H2AX phosphorylation at 'Tyr-142', and is involved in the maintenance of chromatin structures during DNA replication processes. Essential component of the NoRC-5 ISWI chromatin-remodeling complex, a complex that mediates silencing of a fraction of rDNA by recruiting histone-modifying enzymes and DNA methyltransferases, leading to heterochromatin formation and transcriptional silencing. Required for embryonic development and differentiation, and the proliferation of early blastocyst-derived stem cells. In Mus musculus (Mouse), this protein is SWI/SNF-related matrix-associated actin-dependent regulator of chromatin subfamily A member 5 (Smarca5).